We begin with the raw amino-acid sequence, 220 residues long: Fructose-6-phosphate aldolase (220 aa).

The active-site Schiff-base intermediate with substrate is lysine 85.

This sequence belongs to the transaldolase family. Type 3A subfamily. Homodecamer.

Its subcellular location is the cytoplasm. The enzyme catalyses beta-D-fructose 6-phosphate = dihydroxyacetone + D-glyceraldehyde 3-phosphate. Catalyzes the reversible formation of fructose 6-phosphate from dihydroxyacetone and D-glyceraldehyde 3-phosphate via an aldolization reaction. This is Fructose-6-phosphate aldolase from Salmonella choleraesuis (strain SC-B67).